The following is a 282-amino-acid chain: 4-diphosphocytidyl-2-C-methyl-D-erythritol kinase (282 aa).

Lys15 is an active-site residue. Residue 98 to 108 participates in ATP binding; it reads PMGGGVGGGSS. The active site involves Asp140.

Belongs to the GHMP kinase family. IspE subfamily.

It catalyses the reaction 4-CDP-2-C-methyl-D-erythritol + ATP = 4-CDP-2-C-methyl-D-erythritol 2-phosphate + ADP + H(+). It functions in the pathway isoprenoid biosynthesis; isopentenyl diphosphate biosynthesis via DXP pathway; isopentenyl diphosphate from 1-deoxy-D-xylulose 5-phosphate: step 3/6. Catalyzes the phosphorylation of the position 2 hydroxy group of 4-diphosphocytidyl-2C-methyl-D-erythritol. The chain is 4-diphosphocytidyl-2-C-methyl-D-erythritol kinase from Azoarcus sp. (strain BH72).